Reading from the N-terminus, the 474-residue chain is Trehalose-6-phosphate synthase (474 aa).

Position 10 (Arg10) interacts with D-glucose 6-phosphate. Gly22–Gly23 provides a ligand contact to UDP-alpha-D-glucose. D-glucose 6-phosphate contacts are provided by Tyr77 and Asp131. Residues Arg263 and Lys268 each contribute to the UDP-alpha-D-glucose site. Residue Arg301 participates in D-glucose 6-phosphate binding. UDP-alpha-D-glucose-binding positions include Phe340 and Leu366–Glu370.

The protein belongs to the glycosyltransferase 20 family. Homotetramer.

The catalysed reaction is D-glucose 6-phosphate + UDP-alpha-D-glucose = alpha,alpha-trehalose 6-phosphate + UDP + H(+). The protein operates within glycan biosynthesis; trehalose biosynthesis. Functionally, probably involved in the osmoprotection via the biosynthesis of trehalose. Catalyzes the transfer of glucose from UDP-alpha-D-glucose (UDP-Glc) to D-glucose 6-phosphate (Glc-6-P) to form trehalose-6-phosphate. Acts with retention of the anomeric configuration of the UDP-sugar donor. The sequence is that of Trehalose-6-phosphate synthase from Escherichia coli O6:K15:H31 (strain 536 / UPEC).